A 331-amino-acid chain; its full sequence is Ribosomal RNA small subunit methyltransferase H (331 aa).

S-adenosyl-L-methionine is bound by residues 56 to 58, D76, F100, D122, and Q129; that span reads GGH.

The protein belongs to the methyltransferase superfamily. RsmH family.

Its subcellular location is the cytoplasm. It catalyses the reaction cytidine(1402) in 16S rRNA + S-adenosyl-L-methionine = N(4)-methylcytidine(1402) in 16S rRNA + S-adenosyl-L-homocysteine + H(+). In terms of biological role, specifically methylates the N4 position of cytidine in position 1402 (C1402) of 16S rRNA. The protein is Ribosomal RNA small subunit methyltransferase H of Chromohalobacter salexigens (strain ATCC BAA-138 / DSM 3043 / CIP 106854 / NCIMB 13768 / 1H11).